The sequence spans 376 residues: Mitogen-activated protein kinase 6 (376 aa).

Positions 43–329 (APPIRPIGRG…VDEALHHPYL (287 aa)) constitute a Protein kinase domain. ATP contacts are provided by residues 49–57 (IGRGAYGIV) and Lys72. Asp169 acts as the Proton acceptor in catalysis. Thr201 is modified (phosphothreonine). The short motif at 201–203 (TEY) is the TXY element. Tyr203 carries the post-translational modification Phosphotyrosine.

This sequence belongs to the protein kinase superfamily. CMGC Ser/Thr protein kinase family. MAP kinase subfamily. Post-translationally, dually phosphorylated on Thr-201 and Tyr-203, which activates the enzyme.

The enzyme catalyses L-seryl-[protein] + ATP = O-phospho-L-seryl-[protein] + ADP + H(+). It catalyses the reaction L-threonyl-[protein] + ATP = O-phospho-L-threonyl-[protein] + ADP + H(+). Its activity is regulated as follows. Activated by threonine and tyrosine phosphorylation. The chain is Mitogen-activated protein kinase 6 (MPK6) from Oryza sativa subsp. japonica (Rice).